The primary structure comprises 143 residues: UPF0306 protein plu4501 (143 aa).

It belongs to the UPF0306 family.

The polypeptide is UPF0306 protein plu4501 (Photorhabdus laumondii subsp. laumondii (strain DSM 15139 / CIP 105565 / TT01) (Photorhabdus luminescens subsp. laumondii)).